The chain runs to 423 residues: Testican-2 (423 aa).

A signal peptide spans 1-22 (MRAPGSGRLALPLLLLAVVALA). Phosphoserine is present on S72. Cystine bridges form between C90–C101, C95–C111, C136–C166, C139–C159, and C148–C180. The 53-residue stretch at 130 to 182 (GGKDSVCKPCHMAQLASVCGSDGHTYSSVCKLEQQACLSSKQLAVRCEGPCPC) folds into the Kazal-like domain. N-linked (GlcNAc...) asparagine glycosylation is present at N225. The region spanning 309–375 (KPPCLAELER…GTRMHGTPDC (67 aa)) is the Thyroglobulin type-1 domain. Disulfide bonds link C312-C336, C347-C354, and C356-C375. O-linked (Xyl...) (glycosaminoglycan) serine glycans are attached at residues S382 and S387. Residues 387-423 (SGVGWEDEEEKETEEAGEEAEEEEGEAGEADDGGYIW) form a disordered region. Positions 391–423 (WEDEEEKETEEAGEEAEEEEGEAGEADDGGYIW) are enriched in acidic residues.

Post-translationally, O-glycosylated; contains chondroitin sulfate and heparan sulfate. In terms of tissue distribution, brain specific.

Its subcellular location is the secreted. It localises to the extracellular space. The protein localises to the extracellular matrix. In terms of biological role, may participate in diverse steps of neurogenesis. Binds calcium. In Mus musculus (Mouse), this protein is Testican-2 (Spock2).